The following is an 887-amino-acid chain: Bifunctional uridylyltransferase/uridylyl-removing enzyme (887 aa).

Positions 1–337 are uridylyltransferase; sequence MINTSPLLNY…RLPNYERKIE (337 aa). The interval 339 to 699 is uridylyl-removing; sequence VNDHFKIVDN…AHRKAAQDAV (361 aa). The 123-residue stretch at 457–579 folds into the HD domain; sequence VDAHTLLLLR…LGDMEHLDYL (123 aa). 2 ACT domains span residues 700 to 782 and 809 to 887; these read QIFI…LMQR and MVEI…ICQH.

This sequence belongs to the GlnD family. It depends on Mg(2+) as a cofactor.

It catalyses the reaction [protein-PII]-L-tyrosine + UTP = [protein-PII]-uridylyl-L-tyrosine + diphosphate. The catalysed reaction is [protein-PII]-uridylyl-L-tyrosine + H2O = [protein-PII]-L-tyrosine + UMP + H(+). Its activity is regulated as follows. Uridylyltransferase (UTase) activity is inhibited by glutamine, while glutamine activates uridylyl-removing (UR) activity. In terms of biological role, modifies, by uridylylation and deuridylylation, the PII regulatory proteins (GlnB and homologs), in response to the nitrogen status of the cell that GlnD senses through the glutamine level. Under low glutamine levels, catalyzes the conversion of the PII proteins and UTP to PII-UMP and PPi, while under higher glutamine levels, GlnD hydrolyzes PII-UMP to PII and UMP (deuridylylation). Thus, controls uridylylation state and activity of the PII proteins, and plays an important role in the regulation of nitrogen assimilation and metabolism. The sequence is that of Bifunctional uridylyltransferase/uridylyl-removing enzyme from Acinetobacter baumannii (strain ATCC 17978 / DSM 105126 / CIP 53.77 / LMG 1025 / NCDC KC755 / 5377).